The chain runs to 509 residues: Lysophospholipid acyltransferase (509 aa).

Topologically, residues 1-14 (MAYLIDIPFEYFSS) are lumenal. A helical membrane pass occupies residues 15 to 35 (FLGVHPDQLKLLFCFLSAYPF). Residues 36–55 (AGILKRLPSAPWIRNLFSIS) lie on the Cytoplasmic side of the membrane. The chain crosses the membrane as a helical span at residues 56–76 (IGLFYLIGVHHLYDGVLVLLF). Residues 77–94 (DALFTYFVAAFYRSSRMP) lie on the Lumenal side of the membrane. A helical membrane pass occupies residues 95–115 (WIIFIVILGHTFSSHVIRYIY). The Cytoplasmic segment spans residues 116-223 (PSENTDITAS…LEPALGRCWR (108 aa)). A helical membrane pass occupies residues 224–244 (GLLWLILFITGSSIYPLKFLL). Topologically, residues 245-246 (TP) are lumenal. The chain crosses the membrane as a helical span at residues 247–267 (KFASSPILLKYGYVCITAFVA). The Cytoplasmic portion of the chain corresponds to 268–410 (RMKYYGAWEL…TPGPFKRVYD (143 aa)). Residue H363 is part of the active site. The helical transmembrane segment at 411-431 (VIGMVATNLSLSYLIISFLLL) threads the bilayer. The Lumenal segment spans residues 432–441 (NLKESIHVWK). The chain crosses the membrane as a helical span at residues 442–462 (ELYFIVHIYILIALAVFNSPI). The Cytoplasmic segment spans residues 463 to 509 (RSKLDNKIRSRVNSYKLKSYEQSMKSTSDTDMLNMSVPKREDFENDE). The interval 488-509 (STSDTDMLNMSVPKREDFENDE) is disordered. S490 carries the post-translational modification Phosphoserine. Positions 500–509 (PKREDFENDE) are enriched in basic and acidic residues.

The protein belongs to the membrane-bound acyltransferase family.

It localises to the endoplasmic reticulum membrane. It is found in the microsome membrane. It catalyses the reaction a 1-acyl-sn-glycero-3-phosphate + an acyl-CoA = a 1,2-diacyl-sn-glycero-3-phosphate + CoA. The enzyme catalyses a 1-acyl-sn-glycero-3-phosphocholine + an acyl-CoA = a 1,2-diacyl-sn-glycero-3-phosphocholine + CoA. The catalysed reaction is a 1-acyl-sn-glycero-3-phosphoethanolamine + an acyl-CoA = a 1,2-diacyl-sn-glycero-3-phosphoethanolamine + CoA. Functionally, membrane-bound O-acyltransferase that mediates the incorporation of unsaturated acyl chains into the sn-2 position of phospholipids. In Schizosaccharomyces pombe (strain 972 / ATCC 24843) (Fission yeast), this protein is Lysophospholipid acyltransferase (ale1).